Here is a 481-residue protein sequence, read N- to C-terminus: Phospho-2-dehydro-3-deoxyheptonate aldolase (481 aa).

Residues 1–22 (MSQQTTPNAPGWAPDSWRSKPI) form a disordered region.

This sequence belongs to the class-II DAHP synthase family. As to quaternary structure, homodimer. The N-terminus is blocked.

The catalysed reaction is D-erythrose 4-phosphate + phosphoenolpyruvate + H2O = 7-phospho-2-dehydro-3-deoxy-D-arabino-heptonate + phosphate. Its pathway is metabolic intermediate biosynthesis; chorismate biosynthesis; chorismate from D-erythrose 4-phosphate and phosphoenolpyruvate: step 1/7. The sequence is that of Phospho-2-dehydro-3-deoxyheptonate aldolase (aro-8) from Neurospora crassa (strain ATCC 24698 / 74-OR23-1A / CBS 708.71 / DSM 1257 / FGSC 987).